The primary structure comprises 149 residues: Calmodulin (149 aa).

At Ala-2 the chain carries N-acetylalanine. EF-hand domains are found at residues 8–43 (EQIAEFKEAFSLFDKDGDGTITTKELGTVMRSLGQN), 44–79 (PTEAELQDMINEVDADGDGTIDFPEFLTMMARKMKD), 81–116 (DSEEEIREAFRVFDKDGNGFISAAELRHVMTNLGEK), and 117–149 (LTDEEVDEMIREADIDGDGQVNYEEFVTMMTSK). Ca(2+)-binding residues include Asp-21, Asp-23, Asp-25, Thr-27, Glu-32, Asp-57, Asp-59, Asp-61, Thr-63, Glu-68, Asp-94, Asp-96, Asn-98, and Glu-105. Lys-116 is modified (N6,N6,N6-trimethyllysine). Residues Asp-130, Asp-132, Asp-134, Gln-136, and Glu-141 each contribute to the Ca(2+) site.

This sequence belongs to the calmodulin family.

Its function is as follows. Calmodulin mediates the control of a large number of enzymes, ion channels and other proteins by Ca(2+). Among the enzymes to be stimulated by the calmodulin-Ca(2+) complex are a number of protein kinases and phosphatases. This Pyuridae sp. (Sea squirt) protein is Calmodulin.